The chain runs to 336 residues: Peroxidase 20 (336 aa).

The N-terminal stretch at 1 to 24 (MEIKQKKVWLSLIVLYAITTSVLG) is a signal peptide. 4 cysteine pairs are disulfide-bonded: Cys39–Cys119, Cys72–Cys77, Cys125–Cys331, and Cys204–Cys239. The active-site Proton acceptor is His70. Asp71, Val74, Gly76, Asp78, and Ser80 together coordinate Ca(2+). Pro167 contributes to the substrate binding site. Residue Asn170 is glycosylated (N-linked (GlcNAc...) asparagine). A heme b-binding site is contributed by His197. Thr198 contributes to the Ca(2+) binding site. Positions 252, 255, and 260 each coordinate Ca(2+).

The protein belongs to the peroxidase family. Classical plant (class III) peroxidase subfamily. Requires heme b as cofactor. Ca(2+) is required as a cofactor.

Its subcellular location is the secreted. The catalysed reaction is 2 a phenolic donor + H2O2 = 2 a phenolic radical donor + 2 H2O. Removal of H(2)O(2), oxidation of toxic reductants, biosynthesis and degradation of lignin, suberization, auxin catabolism, response to environmental stresses such as wounding, pathogen attack and oxidative stress. These functions might be dependent on each isozyme/isoform in each plant tissue. In terms of biological role, may be implicated in the systemic acquired resistance response via the salicylic acid signal transduction pathway. This is Peroxidase 20 (PER20) from Arabidopsis thaliana (Mouse-ear cress).